We begin with the raw amino-acid sequence, 151 residues long: MTGKYMPRTVILGVIGSDAHVVGITILEQALSAAGFEVINLGVQTAQDEFVSAAKSHDAEAVLVSSLYGHARQDCEGLHDELDDAGLDVLTYVGGNLAVGQSDFEETQATFRQMGFDRVFDAETDPEEAIEMLREDLQLTTTEAEQIRVDG.

Residues P7–T140 form the B12-binding domain. Residues S17 to V21, H20, S65 to L67, and N96 to G100 each bind adenosylcob(III)alamin.

Belongs to the methylaspartate mutase GlmS subunit family. As to quaternary structure, heterotetramer composed of 2 epsilon subunits (GlmE) and 2 sigma subunits (GlmS). GlmE exists as a homodimer and GlmS as a monomer. Adenosylcob(III)alamin serves as cofactor.

It carries out the reaction (2S,3S)-3-methyl-L-aspartate = L-glutamate. It functions in the pathway amino-acid degradation; L-glutamate degradation via mesaconate pathway; acetate and pyruvate from L-glutamate: step 1/4. Functionally, catalyzes the carbon skeleton rearrangement of L-glutamate to L-threo-3-methylaspartate ((2S,3S)-3-methylaspartate). This chain is Glutamate mutase sigma subunit 1, found in Haloarcula marismortui (strain ATCC 43049 / DSM 3752 / JCM 8966 / VKM B-1809) (Halobacterium marismortui).